A 142-amino-acid chain; its full sequence is UPF0102 protein Synpcc7942_0312 (142 aa).

The protein belongs to the UPF0102 family.

This Synechococcus elongatus (strain ATCC 33912 / PCC 7942 / FACHB-805) (Anacystis nidulans R2) protein is UPF0102 protein Synpcc7942_0312.